A 151-amino-acid chain; its full sequence is Transcriptional regulator MraZ (151 aa).

2 consecutive SpoVT-AbrB domains span residues 5–51 and 81–124; these read AHEL…PVAE and AEIL…GREQ.

This sequence belongs to the MraZ family. In terms of assembly, forms oligomers.

Its subcellular location is the cytoplasm. The protein localises to the nucleoid. This Neisseria meningitidis serogroup A / serotype 4A (strain DSM 15465 / Z2491) protein is Transcriptional regulator MraZ.